The primary structure comprises 476 residues: RNA-binding protein 45 (476 aa).

The span at Met-1–Arg-14 shows a compositional bias: gly residues. Residues Met-1 to Leu-20 are disordered. RRM domains lie at Ser-26 to Ser-106 and Thr-121 to Pro-192. A Glycyl lysine isopeptide (Lys-Gly) (interchain with G-Cter in SUMO2) cross-link involves residue Lys-34. The tract at residues Pro-192–Ala-212 is disordered. Residues Val-196–Arg-209 are compositionally biased toward polar residues. 2 positions are modified to phosphoserine: Ser-199 and Ser-464. The RRM 3 domain occupies Glu-392–Ser-464.

The protein localises to the cytoplasm. It is found in the nucleus. Functionally, RNA-binding protein with binding specificity for poly(C). May play an important role in neural development. This is RNA-binding protein 45 (Rbm45) from Mus musculus (Mouse).